Reading from the N-terminus, the 149-residue chain is Transcription antitermination protein NusB (149 aa).

This sequence belongs to the NusB family.

Its function is as follows. Involved in transcription antitermination. Required for transcription of ribosomal RNA (rRNA) genes. Binds specifically to the boxA antiterminator sequence of the ribosomal RNA (rrn) operons. The sequence is that of Transcription antitermination protein NusB from Chromobacterium violaceum (strain ATCC 12472 / DSM 30191 / JCM 1249 / CCUG 213 / NBRC 12614 / NCIMB 9131 / NCTC 9757 / MK).